The following is a 148-amino-acid chain: D-aminoacyl-tRNA deacylase (148 aa).

Residues 137 to 138 (GP) carry the Gly-cisPro motif, important for rejection of L-amino acids motif.

Belongs to the DTD family. As to quaternary structure, homodimer.

The protein resides in the cytoplasm. The catalysed reaction is glycyl-tRNA(Ala) + H2O = tRNA(Ala) + glycine + H(+). The enzyme catalyses a D-aminoacyl-tRNA + H2O = a tRNA + a D-alpha-amino acid + H(+). In terms of biological role, an aminoacyl-tRNA editing enzyme that deacylates mischarged D-aminoacyl-tRNAs. Also deacylates mischarged glycyl-tRNA(Ala), protecting cells against glycine mischarging by AlaRS. Acts via tRNA-based rather than protein-based catalysis; rejects L-amino acids rather than detecting D-amino acids in the active site. By recycling D-aminoacyl-tRNA to D-amino acids and free tRNA molecules, this enzyme counteracts the toxicity associated with the formation of D-aminoacyl-tRNA entities in vivo and helps enforce protein L-homochirality. This is D-aminoacyl-tRNA deacylase from Ligilactobacillus salivarius (strain UCC118) (Lactobacillus salivarius).